We begin with the raw amino-acid sequence, 351 residues long: MSKIVLDNVRKSYGGNIEVIKGVSLEIADGEFVVLVGPSGCGKSTLLRMIAGLESITSGTISIGERVVNNVEPAERDIAMVFQNYALYPHMTVRENLAYGLKNRKTPKEEIERRIAKAAKALEIEQFLERKPRQLSGGQRQRVAMGRAIVREPAAFLFDEPLSNLDAKLRVQMRVEIKRLQRSLGTTSVYVTHDQMEAMTMADRLVVLNAGHIEQVGTPIELYEKPASTFVATFIGSPSMNLLQSPESAPWQPGRAITLPSGGYTFGVRPEDIRILEEGDQDADGFNAQVRIEAVELVGAESYIHAALSDGKPLIFRVAGRSTHNIDEMVRVGASATDVHIFGADGRRVSD.

Positions Ile4–Ile235 constitute an ABC transporter domain. Gly37–Ser44 contributes to the ATP binding site.

Belongs to the ABC transporter superfamily. sn-glycerol-3-phosphate importer (TC 3.A.1.1.3) family. As to quaternary structure, the complex is composed of two ATP-binding proteins (UgpC), two transmembrane proteins (UgpA and UgpE) and a solute-binding protein (UgpB).

The protein localises to the cell inner membrane. The enzyme catalyses sn-glycerol 3-phosphate(out) + ATP + H2O = sn-glycerol 3-phosphate(in) + ADP + phosphate + H(+). Part of the ABC transporter complex UgpBAEC involved in sn-glycerol-3-phosphate (G3P) import. Responsible for energy coupling to the transport system. The protein is sn-glycerol-3-phosphate import ATP-binding protein UgpC of Brucella abortus (strain 2308).